The sequence spans 626 residues: Polygalacturonase 1 beta-like protein 3 (626 aa).

Residues M1 to G23 form the signal peptide. Residues F117–Y120 form an FXXY 1 repeat. The N-linked (GlcNAc...) asparagine glycan is linked to N124. FXXY repeat units lie at residues F125–Y128, F139–Y142, F153–Y156, F167–Y170, F181–Y184, F195–Y198, F209–Y212, F223–Y226, F238–Y241, F252–Y255, and F266–Y269. N-linked (GlcNAc...) asparagine glycosylation is present at N141. The N-linked (GlcNAc...) asparagine glycan is linked to N277. 7 FXXY repeats span residues F280–Y283, F294–Y297, F308–Y311, F322–Y325, F336–Y339, F350–Y353, and F364–Y367. N-linked (GlcNAc...) asparagine glycosylation occurs at N370. FXXY repeat units follow at residues F373–Y376 and F383–Y386. N-linked (GlcNAc...) asparagine glycosylation is found at N387 and N465. In terms of domain architecture, BURP spans F411–A625.

Expressed in flowers and stems. Detected in trichomes, guard cells, root vascular tissue, root hairs, pollen sacs, sepals and styles of pistils.

Its subcellular location is the secreted. It localises to the extracellular space. The protein localises to the apoplast. The protein resides in the cell wall. Its function is as follows. Involved in cell size determination. May serve as a chaperone for expansins through the secretory pathway. The protein is Polygalacturonase 1 beta-like protein 3 of Arabidopsis thaliana (Mouse-ear cress).